The sequence spans 314 residues: Small ribosomal subunit biogenesis GTPase RsgA (314 aa).

The CP-type G domain occupies 78–238 (SEIFREKLIA…IIDSPGFQEF (161 aa)). GTP is bound by residues 127–130 (NKID) and 180–188 (GQSGVGKST). Residues cysteine 262, cysteine 267, histidine 269, and cysteine 275 each contribute to the Zn(2+) site.

Belongs to the TRAFAC class YlqF/YawG GTPase family. RsgA subfamily. In terms of assembly, monomer. Associates with 30S ribosomal subunit, binds 16S rRNA. Zn(2+) is required as a cofactor.

The protein localises to the cytoplasm. One of several proteins that assist in the late maturation steps of the functional core of the 30S ribosomal subunit. Helps release RbfA from mature subunits. May play a role in the assembly of ribosomal proteins into the subunit. Circularly permuted GTPase that catalyzes slow GTP hydrolysis, GTPase activity is stimulated by the 30S ribosomal subunit. This chain is Small ribosomal subunit biogenesis GTPase RsgA, found in Nitrosomonas europaea (strain ATCC 19718 / CIP 103999 / KCTC 2705 / NBRC 14298).